Reading from the N-terminus, the 227-residue chain is N-(5'-phosphoribosyl)anthranilate isomerase (227 aa).

Belongs to the TrpF family.

It catalyses the reaction N-(5-phospho-beta-D-ribosyl)anthranilate = 1-(2-carboxyphenylamino)-1-deoxy-D-ribulose 5-phosphate. It functions in the pathway amino-acid biosynthesis; L-tryptophan biosynthesis; L-tryptophan from chorismate: step 3/5. This chain is N-(5'-phosphoribosyl)anthranilate isomerase, found in Herminiimonas arsenicoxydans.